The primary structure comprises 327 residues: Methionine import ATP-binding protein MetN (327 aa).

Positions 3–239 (VELKNIEKIY…PKHAVTKELI (237 aa)) constitute an ABC transporter domain. 36–43 (GYSGAGKS) is an ATP binding site.

This sequence belongs to the ABC transporter superfamily. Methionine importer (TC 3.A.1.24) family. The complex is composed of two ATP-binding proteins (MetN), two transmembrane proteins (MetI) and a solute-binding protein (MetQ).

Its subcellular location is the cell inner membrane. It carries out the reaction L-methionine(out) + ATP + H2O = L-methionine(in) + ADP + phosphate + H(+). The enzyme catalyses D-methionine(out) + ATP + H2O = D-methionine(in) + ADP + phosphate + H(+). Functionally, part of the ABC transporter complex MetNIQ involved in methionine import. Responsible for energy coupling to the transport system. In Helicobacter acinonychis (strain Sheeba), this protein is Methionine import ATP-binding protein MetN.